We begin with the raw amino-acid sequence, 170 residues long: Adenine phosphoribosyltransferase (170 aa).

This sequence belongs to the purine/pyrimidine phosphoribosyltransferase family. As to quaternary structure, homodimer.

It is found in the cytoplasm. The enzyme catalyses AMP + diphosphate = 5-phospho-alpha-D-ribose 1-diphosphate + adenine. Its pathway is purine metabolism; AMP biosynthesis via salvage pathway; AMP from adenine: step 1/1. In terms of biological role, catalyzes a salvage reaction resulting in the formation of AMP, that is energically less costly than de novo synthesis. This is Adenine phosphoribosyltransferase from Thermotoga sp. (strain RQ2).